Reading from the N-terminus, the 351-residue chain is Protein FAM118B (351 aa).

The residue at position 2 (alanine 2) is an N-acetylalanine. At serine 9 the chain carries Phosphoserine.

It belongs to the FAM118 family.

The protein resides in the nucleus. Its subcellular location is the cajal body. Functionally, may play a role in Cajal bodies formation. In Bos taurus (Bovine), this protein is Protein FAM118B (FAM118B).